The sequence spans 399 residues: Probable 3-ketosteroid-9-alpha-monooxygenase, oxygenase component (399 aa).

The region spanning 26–128 (WHCLGLVRDF…VAEVSGQLFV (103 aa)) is the Rieske domain. [2Fe-2S] cluster is bound by residues C67, H69, C86, and H89. Residues N175, H181, H186, and D307 each contribute to the Fe cation site.

Homotrimer. The two-component system 3-ketosteroid-9-alpha-monooxygenase is composed of an oxygenase component KshA and a reductase component KshB. [2Fe-2S] cluster serves as cofactor. It depends on Fe cation as a cofactor.

Functionally, could catalyze the introduction of a 9alpha-hydroxyl moiety into the ring B of 3-ketosteroid substrates. The chain is Probable 3-ketosteroid-9-alpha-monooxygenase, oxygenase component from Rhodococcus rhodochrous.